The following is a 181-amino-acid chain: Putative manganese efflux pump MntP (181 aa).

6 helical membrane-spanning segments follow: residues 3–23 (LIFLSIALAMDSVAISMANGA), 42–62 (IFQAFMPVIGYFLGLAFVGFI), 63–83 (SYIDHYVAFAILLFLGIKMIK), 101–121 (LMLGAFATSLDALAVGITFSF), 124–144 (INIAIAAFVIGLVCFVLCVIA), and 160–180 (LVLGGVILILIGCKIIITHLI).

The protein belongs to the MntP (TC 9.B.29) family.

It localises to the cell inner membrane. Functionally, probably functions as a manganese efflux pump. This is Putative manganese efflux pump MntP from Campylobacter fetus subsp. fetus (strain 82-40).